A 933-amino-acid chain; its full sequence is Protein translocase subunit SecA (933 aa).

Residues Q90, 108–112 (GEGKT), and D504 contribute to the ATP site. A disordered region spans residues 539–570 (GMGSNNRRPQGFGQDSKKKKWQPSADIFPTDL).

It belongs to the SecA family. Monomer and homodimer. Part of the essential Sec protein translocation apparatus which comprises SecA, SecYEG and auxiliary proteins SecDF. Other proteins may also be involved.

It is found in the cell inner membrane. The protein resides in the cellular thylakoid membrane. The protein localises to the cytoplasm. It catalyses the reaction ATP + H2O + cellular proteinSide 1 = ADP + phosphate + cellular proteinSide 2.. Its function is as follows. Part of the Sec protein translocase complex. Interacts with the SecYEG preprotein conducting channel. Has a central role in coupling the hydrolysis of ATP to the transfer of proteins into and across the cell membrane, serving as an ATP-driven molecular motor driving the stepwise translocation of polypeptide chains across the membrane. Functionally, probably participates in protein translocation into and across both the cytoplasmic and thylakoid membranes in cyanobacterial cells. The sequence is that of Protein translocase subunit SecA from Crocosphaera subtropica (strain ATCC 51142 / BH68) (Cyanothece sp. (strain ATCC 51142)).